The sequence spans 305 residues: UDP-3-O-acyl-N-acetylglucosamine deacetylase (305 aa).

His79, His238, and Asp242 together coordinate Zn(2+). The active-site Proton donor is His265.

It belongs to the LpxC family. Zn(2+) is required as a cofactor.

The catalysed reaction is a UDP-3-O-[(3R)-3-hydroxyacyl]-N-acetyl-alpha-D-glucosamine + H2O = a UDP-3-O-[(3R)-3-hydroxyacyl]-alpha-D-glucosamine + acetate. It functions in the pathway glycolipid biosynthesis; lipid IV(A) biosynthesis; lipid IV(A) from (3R)-3-hydroxytetradecanoyl-[acyl-carrier-protein] and UDP-N-acetyl-alpha-D-glucosamine: step 2/6. Functionally, catalyzes the hydrolysis of UDP-3-O-myristoyl-N-acetylglucosamine to form UDP-3-O-myristoylglucosamine and acetate, the committed step in lipid A biosynthesis. In Vibrio vulnificus (strain CMCP6), this protein is UDP-3-O-acyl-N-acetylglucosamine deacetylase.